A 293-amino-acid chain; its full sequence is ADP-forming sulfoacetate-CoA ligase subunit SauD (293 aa).

CoA-binding positions include 17-20 (TGKE), Lys43, and 96-98 (IAD). The active-site Tele-phosphohistidine intermediate is His251.

The protein belongs to the succinate/malate CoA ligase alpha subunit family. In terms of assembly, forms a complex with SauC.

The enzyme catalyses sulfoacetate + ATP + CoA = sulfoacetyl-CoA + ADP + phosphate. Functionally, involved in the degradation of sulfoacetate. Catalyzes the CoA- and ATP-dependent conversion of sulfoacetate to sulfoacetyl-CoA and ADP. Cannot use other sulfonic and carboxylic acids, and shows only residual activity with 3-sulfopropanoate and malonic acid. The polypeptide is ADP-forming sulfoacetate-CoA ligase subunit SauD (Bilophila wadsworthia (strain 3_1_6)).